The primary structure comprises 383 residues: Chaperone protein DnaJ (383 aa).

The region spanning aspartate 5–glycine 70 is the J domain. The segment at glycine 137–serine 215 adopts a CR-type zinc-finger fold. Cysteine 150, cysteine 153, cysteine 167, cysteine 170, cysteine 189, cysteine 192, cysteine 203, and cysteine 206 together coordinate Zn(2+). CXXCXGXG motif repeat units follow at residues cysteine 150 to glycine 157, cysteine 167 to glycine 174, cysteine 189 to glycine 196, and cysteine 203 to glycine 210.

The protein belongs to the DnaJ family. As to quaternary structure, homodimer. Requires Zn(2+) as cofactor.

The protein localises to the cytoplasm. Its function is as follows. Participates actively in the response to hyperosmotic and heat shock by preventing the aggregation of stress-denatured proteins and by disaggregating proteins, also in an autonomous, DnaK-independent fashion. Unfolded proteins bind initially to DnaJ; upon interaction with the DnaJ-bound protein, DnaK hydrolyzes its bound ATP, resulting in the formation of a stable complex. GrpE releases ADP from DnaK; ATP binding to DnaK triggers the release of the substrate protein, thus completing the reaction cycle. Several rounds of ATP-dependent interactions between DnaJ, DnaK and GrpE are required for fully efficient folding. Also involved, together with DnaK and GrpE, in the DNA replication of plasmids through activation of initiation proteins. The polypeptide is Chaperone protein DnaJ (Buchnera aphidicola subsp. Baizongia pistaciae (strain Bp)).